The chain runs to 95 residues: MRSYETMYVLSPDLNEEERKGLIERFKNLIVERGGEITNFDEWGKRKLAYPIQKKSEGYYVLMNFNSSPDVSRELERVYRITDGVLRYLIIRTDD.

Belongs to the bacterial ribosomal protein bS6 family.

Binds together with bS18 to 16S ribosomal RNA. The polypeptide is Small ribosomal subunit protein bS6 (Caldanaerobacter subterraneus subsp. tengcongensis (strain DSM 15242 / JCM 11007 / NBRC 100824 / MB4) (Thermoanaerobacter tengcongensis)).